A 226-amino-acid polypeptide reads, in one-letter code: N-acetyltransferase family 8 member 3 (226 aa).

2 helical membrane passes run 36-56 (MLLLPRTLLLLLGVPLTLFLA) and 58-78 (GSWLLVLLSILTLFLSLWFLA). The 160-residue stretch at 61 to 220 (LLVLLSILTL…PMINLKYSLT (160 aa)) folds into the N-acetyltransferase domain.

The protein belongs to the camello family.

It is found in the nucleus membrane. Its subcellular location is the cytoplasm. The protein localises to the perinuclear region. The catalysed reaction is L-lysyl-[protein] + acetyl-CoA = N(6)-acetyl-L-lysyl-[protein] + CoA + H(+). Has histone acetyltransferase activity in vitro, with specificity for histone H4. This chain is N-acetyltransferase family 8 member 3, found in Mus musculus (Mouse).